The sequence spans 268 residues: Ribosomal RNA small subunit methyltransferase A (268 aa).

6 residues coordinate S-adenosyl-L-methionine: Asn11, Leu13, Gly37, Glu58, Asp86, and Asn104.

This sequence belongs to the class I-like SAM-binding methyltransferase superfamily. rRNA adenine N(6)-methyltransferase family. RsmA subfamily.

It localises to the cytoplasm. The enzyme catalyses adenosine(1518)/adenosine(1519) in 16S rRNA + 4 S-adenosyl-L-methionine = N(6)-dimethyladenosine(1518)/N(6)-dimethyladenosine(1519) in 16S rRNA + 4 S-adenosyl-L-homocysteine + 4 H(+). Functionally, specifically dimethylates two adjacent adenosines (A1518 and A1519) in the loop of a conserved hairpin near the 3'-end of 16S rRNA in the 30S particle. May play a critical role in biogenesis of 30S subunits. The sequence is that of Ribosomal RNA small subunit methyltransferase A from Campylobacter fetus subsp. fetus (strain 82-40).